The following is a 423-amino-acid chain: Glycine amidinotransferase, mitochondrial (423 aa).

Residues 1–43 constitute a mitochondrion transit peptide; that stretch reads MLRVRCLRGGSRGAEALHYIGSRLGRTVTGWVQRTFQSTQAAT. 2 positions are modified to phosphoserine: Ser46 and Ser49. An arginine-binding site is contributed by Asp170. Catalysis depends on residues Asp254 and His303. Arginine-binding residues include Asp305, Arg322, Ser354, and Ser355. Lys385 carries the N6-acetyllysine modification. The active-site Amidino-cysteine intermediate is Cys407.

It belongs to the amidinotransferase family. In terms of assembly, homodimer.

It is found in the mitochondrion inner membrane. The enzyme catalyses L-arginine + glycine = guanidinoacetate + L-ornithine. It carries out the reaction 4-aminobutanoate + L-arginine = 4-guanidinobutanoate + L-ornithine. The catalysed reaction is beta-alanine + L-arginine = 3-guanidinopropanoate + L-ornithine. It catalyses the reaction taurine + L-arginine = taurocyamine + L-ornithine. It functions in the pathway amine and polyamine biosynthesis; creatine biosynthesis; creatine from L-arginine and glycine: step 1/2. Its function is as follows. Transamidinase that catalyzes the transfer of the amidino group of L-arginine onto the amino moiety of acceptor metabolites such as glycine, beta-alanine, gamma-aminobutyric acid (GABA) and taurine yielding the corresponding guanidine derivatives. Catalyzes the rate-limiting step of creatine biosynthesis, namely the transfer of the amidino group from L-arginine to glycine to generate guanidinoacetate, which is then methylated by GAMT to form creatine. Provides creatine as a source for ATP generation in tissues with high energy demands, in particular skeletal muscle, heart and brain. The protein is Glycine amidinotransferase, mitochondrial (GATM) of Bos taurus (Bovine).